Here is a 110-residue protein sequence, read N- to C-terminus: MTLRWAMWLLLLAAWSMGYGEAFRCYTCEQPTAINSCKNIAQCKMEDTACKTVLETVEAAFPFNHSPMVTRSCSSSCLATDPDGIGVAHPVFCCFRDLCNSGFPGFVAGL.

The signal sequence occupies residues 1 to 22 (MTLRWAMWLLLLAAWSMGYGEA). The UPAR/Ly6 domain maps to 24-73 (RCYTCEQPTAINSCKNIAQCKMEDTACKTVLETVEAAFPFNHSPMVTRSC). Cystine bridges form between cysteine 25–cysteine 50, cysteine 28–cysteine 37, cysteine 43–cysteine 73, cysteine 77–cysteine 93, and cysteine 94–cysteine 99.

In terms of assembly, homodimer. Interacts with PLAU. Interacts with CHRNA7. As to expression, expressed in skin, eye, whole lung, trachea, esophagus and stomach. Widely expressed in various tissues including spleen and thymus but not pancreas. Expressed in macrophages, dendritic cells, T and B cells. Expressed in lung specifically in ciliated bronchial epithelial cells (at protein level). Expression is decreased in lungs of asthmatic model mice. Expressed in the cornea.

The protein localises to the secreted. In terms of biological role, has an antitumor activity. Was found to be a marker of late differentiation of the skin. Implicated in maintaining the physiological and structural integrity of the keratinocyte layers of the skin. In vitro down-regulates keratinocyte proliferation; the function may involve the proposed role as modulator of nicotinic acetylcholine receptors (nAChRs) activity. In vitro inhibits alpha-7-dependent nAChR currents in an allosteric manner. In T cells may be involved in regulation of intracellular Ca(2+) signaling. Seems to have a immunomodulatory function in the cornea. The function may implicate a possible role as a scavenger receptor for PLAU thereby blocking PLAU-dependent functions of PLAUR such as in cell migration and proliferation. The polypeptide is Secreted Ly-6/uPAR-related protein 1 (Slurp1) (Mus musculus (Mouse)).